The sequence spans 525 residues: GMP synthase [glutamine-hydrolyzing] (525 aa).

The 199-residue stretch at 9 to 207 (RILILDFGSQ…VLEICGCAAL (199 aa)) folds into the Glutamine amidotransferase type-1 domain. Cys86 serves as the catalytic Nucleophile. Residues His181 and Glu183 contribute to the active site. Residues 208-400 (WTPATIIEDA…LGLPYDMLYR (193 aa)) enclose the GMPS ATP-PPase domain. 235–241 (SGGVDSS) lines the ATP pocket.

As to quaternary structure, homodimer.

The enzyme catalyses XMP + L-glutamine + ATP + H2O = GMP + L-glutamate + AMP + diphosphate + 2 H(+). It participates in purine metabolism; GMP biosynthesis; GMP from XMP (L-Gln route): step 1/1. In terms of biological role, catalyzes the synthesis of GMP from XMP. This is GMP synthase [glutamine-hydrolyzing] from Edwardsiella ictaluri (strain 93-146).